A 474-amino-acid polypeptide reads, in one-letter code: tRNA-2-methylthio-N(6)-dimethylallyladenosine synthase (474 aa).

The 118-residue stretch at 3-120 folds into the MTTase N-terminal domain; it reads KKLHIKTWGC…LPEMINSVRG (118 aa). 6 residues coordinate [4Fe-4S] cluster: Cys-12, Cys-49, Cys-83, Cys-157, Cys-161, and Cys-164. One can recognise a Radical SAM core domain in the interval 143–375; that stretch reads RAEGPTAFVS…QERINQQAMA (233 aa). Residues 378-441 form the TRAM domain; that stretch reads RRMLGTTQRI…PNSLRGKVVR (64 aa).

The protein belongs to the methylthiotransferase family. MiaB subfamily. As to quaternary structure, monomer. The cofactor is [4Fe-4S] cluster.

It is found in the cytoplasm. The enzyme catalyses N(6)-dimethylallyladenosine(37) in tRNA + (sulfur carrier)-SH + AH2 + 2 S-adenosyl-L-methionine = 2-methylsulfanyl-N(6)-dimethylallyladenosine(37) in tRNA + (sulfur carrier)-H + 5'-deoxyadenosine + L-methionine + A + S-adenosyl-L-homocysteine + 2 H(+). In terms of biological role, catalyzes the methylthiolation of N6-(dimethylallyl)adenosine (i(6)A), leading to the formation of 2-methylthio-N6-(dimethylallyl)adenosine (ms(2)i(6)A) at position 37 in tRNAs that read codons beginning with uridine. The polypeptide is tRNA-2-methylthio-N(6)-dimethylallyladenosine synthase (Salmonella enteritidis PT4 (strain P125109)).